Reading from the N-terminus, the 447-residue chain is Multicopper oxidase mco (447 aa).

A compositionally biased stretch (basic and acidic residues) spans 1 to 25; the sequence is MMNMKEDKKNTMDMTNMKHHDERKK. The segment at 1 to 29 is disordered; the sequence is MMNMKEDKKNTMDMTNMKHHDERKKLNSS. The Cu cation site is built by His107, His109, His147, His149, His375, His378, His380, His428, Cys429, His430, His434, and Met439.

Belongs to the multicopper oxidase family. Cu cation is required as a cofactor.

It is found in the cytoplasm. Its function is as follows. May be involved in copper homeostasis and oxidative stress response. This is Multicopper oxidase mco (mco) from Staphylococcus haemolyticus (strain JCSC1435).